A 442-amino-acid chain; its full sequence is Glutamyl-tRNA(Gln) amidotransferase subunit D (442 aa).

Residues 63 to 84 (TQTDIGSSAGAGADTEADKTES) are disordered. In terms of domain architecture, Asparaginase/glutaminase spans 102–429 (PTVSLISTGG…PDPTNAMRKS (328 aa)). Active-site residues include Thr112, Thr188, Asp189, and Lys265.

The protein belongs to the asparaginase 1 family. GatD subfamily. Heterodimer of GatD and GatE.

The enzyme catalyses L-glutamyl-tRNA(Gln) + L-glutamine + ATP + H2O = L-glutaminyl-tRNA(Gln) + L-glutamate + ADP + phosphate + H(+). Its function is as follows. Allows the formation of correctly charged Gln-tRNA(Gln) through the transamidation of misacylated Glu-tRNA(Gln) in organisms which lack glutaminyl-tRNA synthetase. The reaction takes place in the presence of glutamine and ATP through an activated gamma-phospho-Glu-tRNA(Gln). The GatDE system is specific for glutamate and does not act on aspartate. In Haloquadratum walsbyi (strain DSM 16790 / HBSQ001), this protein is Glutamyl-tRNA(Gln) amidotransferase subunit D.